The sequence spans 888 residues: MGCSHRLLLWLGAAGTILCSNSEFQTPFLTPSLLPVLVLNSQEQKVTPTPSKLEPASLPNPLGTRGPWVFNTCGASGRSGPTQTQCDGAYTGSSVMVTVGAAGPLKGVQLWRVPDTGQYLISAYGAAGGKGAQNHLSRAHGIFLSAVFFLRRGEPVYILVGQQGQDACPGGSPESQLVCLGESGEHATTYGTERIPGWRRWAGGGGGGGGATSIFRLRAGEPEPLLVAAGGGGRSYRRRPDRGRTQAVPERLETRAAAPGSGGRGGAAGGGSGWTSRAHSPQAGRSPREGAEGGEGCAEAWAALRWAAAGGFGGGGGACAAGGGGGGYRGGDTSESDLLWADGEDGTSFVHPSGELYLQPLAVTEGHGEVEIRKHPNCSHCPFKDCQWQAELWTAECTCPEGTELAVDNVTCMDLPTTASPLILMGAVVAALALSLLMMCAVLILVNQKCQGLWGTRLPGPELELSKLRSSAIRTAPNPYYCQVGLSPAQPWPLPPGLTEVSPANVTLLRALGHGAFGEVYEGLVTGLPGDSSPLPVAIKTLPELCSHQDELDFLMEALIISKFSHQNIVRCVGLSFRSAPRLILLELMSGGDMKSFLRHSRPHPGQLAPLTMQDLLQLAQDIAQGCHYLEENHFIHRDIAARNCLLSCSGASRVAKIGDFGMARDIYQASYYRKGGRTLLPVKWMPPEALLEGLFTSKTDSWSFGVLLWEIFSLGYMPYPGHTNQEVLDFIATGNRMDPPRNCPGPVYRIMTQCWQHQPELRPDFGSILERIQYCTQDPDVLNSPLPVEPGPILEEEEASRLGNRSLEGLRSPKPLELSSQNLKSWGGGLLGSWLPSGLKTLKPRCLQPQNIWNPTYGSWTPRGPQGEDTGIEHCNGSSSSSIPGIQ.

The first 16 residues, 1–16 (MGCSHRLLLWLGAAGT), serve as a signal peptide directing secretion. The Extracellular segment spans residues 17–421 (ILCSNSEFQT…CMDLPTTASP (405 aa)). 2 disulfides stabilise this stretch: Cys73–Cys86 and Cys168–Cys179. The tract at residues 226–294 (LVAAGGGGRS…RSPREGAEGG (69 aa)) is disordered. Residues 260–273 (GSGGRGGAAGGGSG) are compositionally biased toward gly residues. Cys297 and Cys319 are joined by a disulfide. Residues Asn377 and Asn409 are each glycosylated (N-linked (GlcNAc...) asparagine). A helical membrane pass occupies residues 422-446 (LILMGAVVAALALSLLMMCAVLILV). Residues 447 to 888 (NQKCQGLWGT…SSSSSIPGIQ (442 aa)) are Cytoplasmic-facing. The Protein kinase domain occupies 506–782 (VTLLRALGHG…IQYCTQDPDV (277 aa)). Residues 512-520 (LGHGAFGEV) and Lys540 each bind ATP. Asp639 acts as the Proton acceptor in catalysis. Position 672 is a phosphotyrosine; by autocatalysis (Tyr672). The segment at 857–888 (TYGSWTPRGPQGEDTGIEHCNGSSSSSIPGIQ) is disordered. Over residues 877–888 (NGSSSSSIPGIQ) the composition is skewed to polar residues.

It belongs to the protein kinase superfamily. Tyr protein kinase family. Insulin receptor subfamily. As to quaternary structure, homodimer; homodimerizes following ligand-binding. Part of a complex including LTK, TNK2 and GRB2, in which GRB2 promotes LTK recruitment by TNK2. Phosphorylated at tyrosine residues by autocatalysis, which activates kinase activity. In terms of tissue distribution, subsets of lymphoid and neuronal cells.

The protein resides in the cell membrane. It localises to the endoplasmic reticulum. It catalyses the reaction L-tyrosyl-[protein] + ATP = O-phospho-L-tyrosyl-[protein] + ADP + H(+). With respect to regulation, activated by ligand-binding, leading to homodimerization and autophosphorylation. Receptor with a tyrosine-protein kinase activity. Following activation by ALKAL1 or ALKAL2 ligands at the cell surface, transduces an extracellular signal into an intracellular response. Ligand-binding to the extracellular domain induces tyrosine kinase activation, leading to activation of the mitogen-activated protein kinase (MAPK) pathway. Phosphorylates almost exclusively at the first tyrosine of the Y-x-x-x-Y-Y motif. The exact function of this protein is not known; studies with chimeric proteins demonstrate its ability to promote growth and specifically neurite outgrowth, and cell survival. Involved in regulation of the secretory pathway involving endoplasmic reticulum (ER) export sites (ERESs) and ER to Golgi transport. The chain is Leukocyte tyrosine kinase receptor from Mus musculus (Mouse).